The primary structure comprises 674 residues: MQITEKETVQEEQQKLLYPPPSFSTKCHISSVEQYNEMYKESIESPNQFWDKKAKEFLTWFSDYTTVQHGSFEKGDISWFLNGKINVSYNCIDRHLKENADKVAILFEGDEETMVKKVTYREMFEEVCRLSNLLISLGVGKGDTVAIYLPNTPTAIYSMLACARIGAIHSVIFAGFGYESIVSRVHDAKCRVIITADEGLRGGRYIPLKEKIDQVVQHCKLVQHVLVFKNTGRPTITFNPSIDIWADEAMLDHRPYCPPVWLDSEDPLFILYTSGSTGTPKGLVHTQAGYLLYAAMTHRYVFDYHDSDVYACMADVGWITGHSYIVYGPLANGATTFIFEGTPLYPTPARYWEMVQRHKITQFYTAPTAIRSLMKFPISFTQQSDKSSLRVLGSVGEPINPEAWRWFNTNVGEGRCAIVDTYWQTESGGHLITPLPGVTSTKPGSATKPFFGIELQVLDSKTGERLYINPDINGCKEISGVLAISKPWPGIARSVYRSHGRYLQTYMTQYKGHYFTGDGVKLDSDGYYWIEGRVDDVINVSGHRLGTAELESALVGCSICAEAAVVGYPHDIKGQGILAFCTLKEGYQEDESNVIMMLKKEVRNVIGPFATPDVIVITPSLPKTRSGKIMRRILRKIGCHESSAEQLGDISTLAEPEVVKLLIEKVSKVIPKTH.

CoA contacts are provided by residues 201-204 (RGGR) and Thr-320. Residues 396–398 (GEP), 420–425 (DTYWQT), Asp-518, and Arg-533 contribute to the ATP site. Ser-541 provides a ligand contact to CoA. Arg-544 is a binding site for ATP. Arg-603 is a binding site for CoA.

It belongs to the ATP-dependent AMP-binding enzyme family.

The catalysed reaction is acetate + ATP + CoA = acetyl-CoA + AMP + diphosphate. The polypeptide is Acetyl-coenzyme A synthetase (acsA) (Dictyostelium discoideum (Social amoeba)).